The chain runs to 143 residues: Transcriptional regulator SlyA (143 aa).

One can recognise an HTH marR-type domain in the interval E2 to Q135. A DNA-binding region (H-T-H motif) is located at residues Q49–E72.

It belongs to the SlyA family. In terms of assembly, homodimer.

Its function is as follows. Transcription regulator that can specifically activate or repress expression of target genes. Regulates the cpm operon, which contains cpmA, cpmB, cpmC, cpmD, cpmE, cpmF, cpmG and cpmH, involved in carbapenem-like antibiotic production. This is Transcriptional regulator SlyA from Photorhabdus laumondii subsp. laumondii (strain DSM 15139 / CIP 105565 / TT01) (Photorhabdus luminescens subsp. laumondii).